An 85-amino-acid chain; its full sequence is Small ribosomal subunit protein bS16 (85 aa).

It belongs to the bacterial ribosomal protein bS16 family.

This is Small ribosomal subunit protein bS16 from Pseudomonas syringae pv. tomato (strain ATCC BAA-871 / DC3000).